The chain runs to 749 residues: uncharacterized protein (749 aa).

Disordered regions lie at residues 1–58 (MGTV…QPSN), 124–170 (DANA…PSPL), 200–291 (SRFS…PPVS), and 385–405 (YTWS…NPST). The segment covering 13 to 24 (LNNGLSSNNGSS) has biased composition (low complexity). 4 stretches are compositionally biased toward polar residues: residues 149–159 (KSASKDSNAFN), 238–252 (ESKT…PSLN), 265–275 (LNYQNSSLNPS), and 388–405 (SRHS…NPST). Residues 644 to 729 (KRILRKAQPH…YKTRIWMCAV (86 aa)) form the PSP1 C-terminal domain.

This is an uncharacterized protein from Schizosaccharomyces pombe (strain 972 / ATCC 24843) (Fission yeast).